A 300-amino-acid polypeptide reads, in one-letter code: MTIPTKKLDYWSQKGATQAPKNLREKIEKVLTANESKIKRKNQLDIYLQGSYRNNTNIFGSSDVDIVVQSNATFFSNISKLEAYERKIYNQTFDEATYTWRYFKNDVIKTLQYAFGSSNVEIGNKSIKIFTEDYEADVIPCFEHRNYLSFGNSEEDREYIPGIKFFTTDKGESIINYPKKHYVFGVDKNERTNNYYKPTIRIFKNIKKQLIKQKRITKKVVSSYFIESLLYNVPDRYFCIDNASNRVADILNWLTKNQDSFSTFICQNEQMNLFGSSQEQWNEEDADKFIFEINKFWNEW.

Residues aspartate 63, aspartate 65, and aspartate 137 each coordinate Mg(2+).

This sequence belongs to the CD-NTase family. E01 subfamily. The cofactor is Mg(2+).

With respect to regulation, binds to and probably activated by a virus-derived, approximately 400 nucleotide RNA (called CBASS-activating bacteriophage RNA, cabRNA) that begins in the viral terminase subunit terS and extends into terL, as well as by a shorter RNA with part of the cabRNA sequence able to form a hairpin. RNA secondary and/or tertiary structure, as well as viral infection itself, are important for CdnE activation. In terms of biological role, cyclic nucleotide synthase (second messenger synthase) of a CBASS antivirus system. CBASS (cyclic oligonucleotide-based antiphage signaling system) provides immunity against bacteriophage. The CD-NTase protein synthesizes cyclic nucleotides in response to infection; these serve as specific second messenger signals. The signals activate a diverse range of effectors, leading to bacterial cell death and thus abortive phage infection. A type I-B CBASS system. Functionally, protects S.aureus against phage infection. When the CBASS operon (cdnE and the following gene) is introduced in S.aureus strain RN4220 there is strong protection against lytic DNA phages 80alpha-vir and phi-NM1-gamma-6 but little to no protection against phages phi-NM4-gamma-4 or phi-12-gamma-3. The polypeptide is Cyclic nucleotide synthase CdnE01 (Staphylococcus haemolyticus).